Consider the following 218-residue polypeptide: IVGGTDAPRGKYPYQVSLRAPKHFCGGSISKRYVLTAAHCLVGKSKHQVTVHAGSVLLNKEEAVYNAEELIVNKNYNSIRLINDIGLIRVSKDISYTQLVQPVKLPVSNTIKAGDPVVLTGWGRIYVNGPIPNNLQQITLSIVNQQTCKFKHWGLTDSQICTFTKLGEGACDGDSGGPLVANGVQIGIVSYGHPCAVGSPNVFTRVYSFLDWIQKNQL.

The region spanning 1 to 218 (IVGGTDAPRG…FLDWIQKNQL (218 aa)) is the Peptidase S1 domain. Cys-25 and Cys-40 are disulfide-bonded. Active-site charge relay system residues include His-39 and Asp-84. 2 disulfide bridges follow: Cys-148/Cys-161 and Cys-171/Cys-195. Ser-175 serves as the catalytic Charge relay system.

It belongs to the peptidase S1 family.

The protein localises to the secreted. Its subcellular location is the extracellular space. It carries out the reaction Preferential cleavage: Tyr-|-Xaa, Trp-|-Xaa, Phe-|-Xaa, Leu-|-Xaa.. This is Chymotrypsin-2 from Vespa crabro (European hornet).